The primary structure comprises 676 residues: SPARC-like protein 1 (676 aa).

A signal peptide spans 1-16; that stretch reads MKTVLLLICLLGSAFT. Basic and acidic residues predominate over residues 35–44; the sequence is EKHKYTHSEM. Disordered stretches follow at residues 35-151, 173-369, and 385-437; these read EKHK…WALR, NTVG…GVYR, and SEDN…RNST. Over residues 95–108 the composition is skewed to polar residues; the sequence is KNSLRSINFLTLHS. N-linked (GlcNAc...) asparagine glycosylation occurs at Asn182. The span at 184 to 202 shows a compositional bias: acidic residues; it reads SEEEEAGEEEDEEWGEETD. Basic and acidic residues-rich tracts occupy residues 249-266 and 273-291; these read EKFSMEEESQEKLYKEGK and NHNEDQGEKRQSEESKEHF. The span at 312–328 shows a compositional bias: acidic residues; the sequence is NAEEDDNDSGDDGEEDL. N-linked (GlcNAc...) asparagine glycosylation is present at Asn318. Residues 385–394 are compositionally biased toward basic and acidic residues; that stretch reads SEDNHYHHEP. The N-linked (GlcNAc...) asparagine glycan is linked to Asn396. Positions 397 to 408 are enriched in low complexity; the sequence is SSSKQQLQTSSS. Asn413 is a glycosylation site (N-linked (GlcNAc...) asparagine). Over residues 415–433 the composition is skewed to basic and acidic residues; sequence TEHEDEVKTTGGSYHEESA. N-linked (GlcNAc...) asparagine glycosylation is present at Asn435. Residues 444-466 form the Follistatin-like domain; it reads LCRNFHCKRGKVCQADKQGKPSC. Cystine bridges form between Cys445-Cys456, Cys450-Cys466, Cys468-Cys502, Cys474-Cys495, Cys484-Cys521, Cys527-Cys638, and Cys646-Cys662. The Kazal-like domain occupies 462–523; it reads GKPSCICQDP…HLDYMGACKH (62 aa). Asn488 carries an N-linked (GlcNAc...) asparagine glycan. In terms of domain architecture, EF-hand spans 634–669; that stretch reads PMEHCITRFFQECDGDQDKLITLKEWCHCFAIKEED. 4 residues coordinate Ca(2+): Asp647, Asp649, Asp651, and Glu658.

It belongs to the SPARC family. As to expression, glial (Mueller) cells of the neuroretina.

The protein localises to the secreted. It is found in the extracellular space. It localises to the extracellular matrix. Functionally, could play a role in the late stage of neuroretina morphogenesis. The protein is SPARC-like protein 1 (SPARCL1) of Coturnix japonica (Japanese quail).